A 102-amino-acid chain; its full sequence is Noncompact myelin-associated protein (102 aa).

The Extracellular segment spans residues 1–30; that stretch reads MTTATPLGDTTFFSLNMTTRGEDFLYKSSG. Residues 31–51 form a helical membrane-spanning segment; the sequence is AIVAAVVVVVIIIFTVVLILL. The Cytoplasmic segment spans residues 52–102; it reads KMYNRKMRTRRELEPKGPKPTAPSAVGPNSNGSQHPATVTFSPVDVQVETR. The segment at 60–102 is disordered; sequence TRRELEPKGPKPTAPSAVGPNSNGSQHPATVTFSPVDVQVETR. Over residues 78–92 the composition is skewed to polar residues; the sequence is GPNSNGSQHPATVTF.

Glycosylated.

The protein resides in the cell membrane. Functionally, plays a role in myelin formation. This Homo sapiens (Human) protein is Noncompact myelin-associated protein (NCMAP).